Consider the following 207-residue polypeptide: Large ribosomal subunit protein bL25 (207 aa).

Residues 186–207 (SKPRGGAGAEGEADAEGEAAAE) form a disordered region. The segment covering 196 to 207 (GEADAEGEAAAE) has biased composition (acidic residues).

Belongs to the bacterial ribosomal protein bL25 family. CTC subfamily. As to quaternary structure, part of the 50S ribosomal subunit; part of the 5S rRNA/L5/L18/L25 subcomplex. Contacts the 5S rRNA. Binds to the 5S rRNA independently of L5 and L18.

Its function is as follows. This is one of the proteins that binds to the 5S RNA in the ribosome where it forms part of the central protuberance. The protein is Large ribosomal subunit protein bL25 of Methylobacillus flagellatus (strain ATCC 51484 / DSM 6875 / VKM B-1610 / KT).